The chain runs to 514 residues: MAESQPLSVAPEGAEYLRAVLRAPVYEAAQVTPLQKMEKLSSRLDNVILVKREDRQPVHSFKLRGAYAMMAGLTEEQKAHGVITASAGNHAQGVAFSSARLGVKSLIVMPKATADIKVDAVRGFGGEVLLHGANFDEAKAKAIELAQQQGFTWVPPFDHPMVIAGQGTLALELLQQDSHLDRVFVPVGGGGLAAGVAVLIKQLMPQIKVIAVEAEDSACLKAALEAGHPVDLPRVGLFAEGVAVKRIGDETFRLCQEYLDDIITVDSDAICAAMKDLFEDVRAVAEPSGALALAGMKKYIAQHNIRGERLAHVLSGANVNFHGLRYVSERCELGEQREALLAVTIPEEKGSFLKFCQLLGGRMVTEFNYRFADAKNACIFVGVRVSQGLEERKEIITQLCDGGYSVVDLSDDEMAKLHVRYMVGGRPSKPLQERLYSFEFPESPGALLKFLHTLGTHWNISLFHYRSHGTDYGRVLAAFELGDHEPDFETRLHELGYECHDESNNPAFRFFLAG.

Lys62 bears the N6-(pyridoxal phosphate)lysine mark. Residues Asn89, Gly188–Leu192, and Ser315 contribute to the pyridoxal 5'-phosphate site. 2 ACT-like domains span residues Ala339–Asp411 and Arg434–Asn504.

It belongs to the serine/threonine dehydratase family. As to quaternary structure, homotetramer. The cofactor is pyridoxal 5'-phosphate.

The enzyme catalyses L-threonine = 2-oxobutanoate + NH4(+). It participates in amino-acid biosynthesis; L-isoleucine biosynthesis; 2-oxobutanoate from L-threonine: step 1/1. With respect to regulation, isoleucine allosterically inhibits whereas valine allosterically activates this enzyme. Functionally, catalyzes the anaerobic formation of alpha-ketobutyrate and ammonia from threonine in a two-step reaction. The first step involved a dehydration of threonine and a production of enamine intermediates (aminocrotonate), which tautomerizes to its imine form (iminobutyrate). Both intermediates are unstable and short-lived. The second step is the nonenzymatic hydrolysis of the enamine/imine intermediates to form 2-ketobutyrate and free ammonia. In the low water environment of the cell, the second step is accelerated by RidA. In Salmonella typhimurium (strain LT2 / SGSC1412 / ATCC 700720), this protein is L-Threonine dehydratase biosynthetic IlvA (ilvA).